Reading from the N-terminus, the 122-residue chain is Small ribosomal subunit protein uS13 (122 aa).

The disordered stretch occupies residues 99–122 (RGQRTHTNARTRKGPAKAIAGKKK).

This sequence belongs to the universal ribosomal protein uS13 family. In terms of assembly, part of the 30S ribosomal subunit. Forms a loose heterodimer with protein S19. Forms two bridges to the 50S subunit in the 70S ribosome.

Its function is as follows. Located at the top of the head of the 30S subunit, it contacts several helices of the 16S rRNA. In the 70S ribosome it contacts the 23S rRNA (bridge B1a) and protein L5 of the 50S subunit (bridge B1b), connecting the 2 subunits; these bridges are implicated in subunit movement. Contacts the tRNAs in the A and P-sites. The chain is Small ribosomal subunit protein uS13 from Sinorhizobium medicae (strain WSM419) (Ensifer medicae).